Consider the following 172-residue polypeptide: Shikimate kinase (172 aa).

Position 14 to 19 (14 to 19 (GAGKST)) interacts with ATP. Ser18 contacts Mg(2+). Asp36, Arg60, and Gly82 together coordinate substrate. Arg120 contributes to the ATP binding site. A substrate-binding site is contributed by Arg140.

The protein belongs to the shikimate kinase family. As to quaternary structure, monomer. Requires Mg(2+) as cofactor.

It localises to the cytoplasm. The catalysed reaction is shikimate + ATP = 3-phosphoshikimate + ADP + H(+). Its pathway is metabolic intermediate biosynthesis; chorismate biosynthesis; chorismate from D-erythrose 4-phosphate and phosphoenolpyruvate: step 5/7. Its function is as follows. Catalyzes the specific phosphorylation of the 3-hydroxyl group of shikimic acid using ATP as a cosubstrate. The polypeptide is Shikimate kinase (Tolumonas auensis (strain DSM 9187 / NBRC 110442 / TA 4)).